The primary structure comprises 301 residues: Probable alpha-L-glutamate ligase 2 (301 aa).

The 184-residue stretch at 104 to 287 folds into the ATP-grasp domain; sequence MQLLSRKGIG…VASMIIEFIV (184 aa). Residues K141, 178-179, D187, and 211-213 each bind ATP; these read EY and RSN. Positions 248, 260, and 262 each coordinate Mg(2+). 3 residues coordinate Mn(2+): D248, E260, and N262.

Belongs to the RimK family. Mg(2+) serves as cofactor. The cofactor is Mn(2+).

The polypeptide is Probable alpha-L-glutamate ligase 2 (Pseudoalteromonas atlantica (strain T6c / ATCC BAA-1087)).